Reading from the N-terminus, the 257-residue chain is AT-hook motif nuclear-localized protein 16 (257 aa).

A disordered region spans residues 1 to 71 (MAGGTALTPT…SKNKPKPPII (71 aa)). Residues 53–65 (KRPRGRPAGSKNK) constitute a DNA-binding region (a.T hook). One can recognise a PPC domain in the interval 77–214 (PNSLRANAVE…DEAASMQNQQ (138 aa)).

In terms of assembly, interacts with FVE/MSI4 and MSI5 which are components of HDAC corepressor complexes. As to expression, preferentially expressed in the inflorescence meristem and young floral buds, as well as in seedling-stage vegetative meristems. Widely expressed in flowers, roots and stems, with relatively low expression in leaves.

It is found in the nucleus. Its function is as follows. Transcription factor that specifically binds AT-rich DNA sequences related to the nuclear matrix attachment regions (MARs). Encodes a nuclear matrix protein that acts in the maintenance of genomic integrity by silencing TEs and repeat-containing genes through epigenetic machinery. Acts as a chromatin remodeling factor that modifies the architecture of FLC and FWA chromatin by modulating both H3 acetylation and methylation leading to the regulation of FLC and FWA expression. Negatively regulates floral repressors including MAF4 and MAF5. Plays a transcription activation role in anther development. Regulates the expression of arabinogalactan proteins (AGPs) involved in the formation of the nexine layer of the pollen wall. Binds AGP6, AGP11, AGP23 and AGP40 promoters. The polypeptide is AT-hook motif nuclear-localized protein 16 (Arabidopsis thaliana (Mouse-ear cress)).